Here is a 341-residue protein sequence, read N- to C-terminus: L-threonine 3-dehydrogenase (341 aa).

Cys38 contacts Zn(2+). Active-site charge relay system residues include Thr40 and His43. The Zn(2+) site is built by His63, Glu64, Cys93, Cys96, Cys99, and Cys107. NAD(+) is bound by residues Ile175, Asp195, Arg200, 262–264 (LGI), and 286–287 (IY).

It belongs to the zinc-containing alcohol dehydrogenase family. In terms of assembly, homotetramer. Requires Zn(2+) as cofactor.

The protein localises to the cytoplasm. It catalyses the reaction L-threonine + NAD(+) = (2S)-2-amino-3-oxobutanoate + NADH + H(+). The protein operates within amino-acid degradation; L-threonine degradation via oxydo-reductase pathway; glycine from L-threonine: step 1/2. In terms of biological role, catalyzes the NAD(+)-dependent oxidation of L-threonine to 2-amino-3-ketobutyrate. In Alteromonas mediterranea (strain DSM 17117 / CIP 110805 / LMG 28347 / Deep ecotype), this protein is L-threonine 3-dehydrogenase.